The sequence spans 379 residues: Cobalt-precorrin-5B C(1)-methyltransferase (379 aa).

Belongs to the CbiD family.

It carries out the reaction Co-precorrin-5B + S-adenosyl-L-methionine = Co-precorrin-6A + S-adenosyl-L-homocysteine. The protein operates within cofactor biosynthesis; adenosylcobalamin biosynthesis; cob(II)yrinate a,c-diamide from sirohydrochlorin (anaerobic route): step 6/10. Catalyzes the methylation of C-1 in cobalt-precorrin-5B to form cobalt-precorrin-6A. The protein is Cobalt-precorrin-5B C(1)-methyltransferase of Citrobacter koseri (strain ATCC BAA-895 / CDC 4225-83 / SGSC4696).